Reading from the N-terminus, the 100-residue chain is MPKRILIGTVTSDKTDKTVTVLVERKVKHPLYGKIIRRSKKYHAHDEKNEYTLGDVVRIEETKPISKTKTWAVKDRVVAGGTQAIEADLDVAEATPGGAE.

This sequence belongs to the universal ribosomal protein uS17 family. As to quaternary structure, part of the 30S ribosomal subunit.

Its function is as follows. One of the primary rRNA binding proteins, it binds specifically to the 5'-end of 16S ribosomal RNA. The polypeptide is Small ribosomal subunit protein uS17 (Erythrobacter litoralis (strain HTCC2594)).